The chain runs to 283 residues: TIMELESS-interacting protein (283 aa).

The tract at residues 1-68 (MAMIDPLENN…SSSAARKAVK (68 aa)) is disordered. Over residues 15 to 24 (PDYENTEDET) the composition is skewed to acidic residues. The segment at 74–150 (LDANRLVSER…KEVQTCLKRI (77 aa)) is interaction with TIMELESS. Disordered regions lie at residues 186–205 (GNVG…EQQQ) and 217–238 (RRQA…PSYP).

It belongs to the CSM3 family. As to quaternary structure, interacts with TIMELESS, which impairs TIMELESS self-association.

The protein resides in the cytoplasm. The protein localises to the nucleus. Plays an important role in the control of DNA replication and the maintenance of replication fork stability. Important for cell survival after DNA damage or replication stress. May be required for the replication checkpoint induced by hydroxyurea or ultraviolet light. This chain is TIMELESS-interacting protein (TIPIN), found in Gallus gallus (Chicken).